The following is a 225-amino-acid chain: ATP-dependent Clp protease proteolytic subunit (225 aa).

Ser126 (nucleophile) is an active-site residue. Residue His151 is part of the active site.

Belongs to the peptidase S14 family. As to quaternary structure, fourteen ClpP subunits assemble into 2 heptameric rings which stack back to back to give a disk-like structure with a central cavity, resembling the structure of eukaryotic proteasomes.

The protein resides in the cytoplasm. The catalysed reaction is Hydrolysis of proteins to small peptides in the presence of ATP and magnesium. alpha-casein is the usual test substrate. In the absence of ATP, only oligopeptides shorter than five residues are hydrolyzed (such as succinyl-Leu-Tyr-|-NHMec, and Leu-Tyr-Leu-|-Tyr-Trp, in which cleavage of the -Tyr-|-Leu- and -Tyr-|-Trp bonds also occurs).. In terms of biological role, cleaves peptides in various proteins in a process that requires ATP hydrolysis. Has a chymotrypsin-like activity. Plays a major role in the degradation of misfolded proteins. This Psychrobacter arcticus (strain DSM 17307 / VKM B-2377 / 273-4) protein is ATP-dependent Clp protease proteolytic subunit.